A 266-amino-acid chain; its full sequence is Regulatory protein RecX (266 aa).

This sequence belongs to the RecX family.

It is found in the cytoplasm. Its function is as follows. Modulates RecA activity. This is Regulatory protein RecX from Enterococcus faecalis (strain ATCC 700802 / V583).